Consider the following 312-residue polypeptide: Zygote arrest protein 1.L (312 aa).

Disordered stretches follow at residues 79-133 (RDVG…VRFP) and 150-205 (FQDK…DQTR). 2 stretches are compositionally biased toward polar residues: residues 86–95 (NPRQDASVQC) and 113–128 (PQQSPPEQGSPASPTK). Positions 152-196 (DKGENLSEKTEALRSEGSRGEGGRPEGKQEDGEIKEQTKMDKADQ) are enriched in basic and acidic residues. A 3CxxC-type zinc finger spans residues 214-297 (KYGYYHCKDC…RQDLCGRCKG (84 aa)).

This sequence belongs to the ZAR1 family. Ovary.

It localises to the cytoplasm. The protein resides in the cytoplasmic ribonucleoprotein granule. MRNA-binding protein required for maternal mRNA storage, translation and degradation during oocyte maturation. Probably promotes formation of some phase-separated membraneless compartment that stores maternal mRNAs in oocytes: acts by undergoing liquid-liquid phase separation upon binding to maternal mRNAs. Binds to the 3'-UTR of maternal mRNAs in immature oocytes, inhibiting their translation. The polypeptide is Zygote arrest protein 1.L (Xenopus laevis (African clawed frog)).